The sequence spans 227 residues: Cytidylate kinase (227 aa).

10 to 18 (GPSGSGKGT) lines the ATP pocket.

Belongs to the cytidylate kinase family. Type 1 subfamily.

It localises to the cytoplasm. The catalysed reaction is CMP + ATP = CDP + ADP. It carries out the reaction dCMP + ATP = dCDP + ADP. This chain is Cytidylate kinase, found in Acinetobacter baylyi (strain ATCC 33305 / BD413 / ADP1).